Here is a 492-residue protein sequence, read N- to C-terminus: Catalase isozyme 1 (492 aa).

Catalysis depends on residues His-65 and Asn-138. Tyr-348 contacts heme.

This sequence belongs to the catalase family. In terms of assembly, homotetramer. The cofactor is heme.

The protein resides in the peroxisome. It catalyses the reaction 2 H2O2 = O2 + 2 H2O. In terms of biological role, occurs in almost all aerobically respiring organisms and serves to protect cells from the toxic effects of hydrogen peroxide. The sequence is that of Catalase isozyme 1 (CAT1) from Gossypium hirsutum (Upland cotton).